The chain runs to 580 residues: Protein O-linked-mannose beta-1,4-N-acetylglucosaminyltransferase 2 (580 aa).

Residues 1–4 lie on the Cytoplasmic side of the membrane; the sequence is MHLS. Residues 5–25 form a helical; Signal-anchor for type II membrane protein membrane-spanning segment; that stretch reads AVFNALLVSVLAAVLWKHVRL. At 26–580 the chain is on the lumenal side; that stretch reads REHAATLEEE…PFADVLVCNT (555 aa). Residues N99 and N276 are each glycosylated (N-linked (GlcNAc...) asparagine). Residues 488–580 enclose the Fibronectin type-III domain; that stretch reads ARCQASVHGA…PFADVLVCNT (93 aa).

Belongs to the glycosyltransferase 61 family.

It is found in the endoplasmic reticulum membrane. The catalysed reaction is 3-O-(alpha-D-mannosyl)-L-threonyl-[protein] + UDP-N-acetyl-alpha-D-glucosamine = 3-O-(N-acetyl-beta-D-glucosaminyl-(1-&gt;4)-alpha-D-mannosyl)-L-threonyl-[protein] + UDP + H(+). Its pathway is protein modification; protein glycosylation. Functionally, O-linked mannose beta-1,4-N-acetylglucosaminyltransferase that transfers UDP-N-acetyl-D-glucosamine to the 4-position of the mannose to generate N-acetyl-D-glucosamine-beta-1,4-O-D-mannosylprotein. Involved in the biosynthesis of the phosphorylated O-mannosyl trisaccharide (N-acetylgalactosamine-beta-3-N-acetylglucosamine-beta-4-(phosphate-6-)mannose), a carbohydrate structure present in alpha-dystroglycan (DAG1), which is required for binding laminin G-like domain-containing extracellular proteins with high affinity. The polypeptide is Protein O-linked-mannose beta-1,4-N-acetylglucosaminyltransferase 2 (POMGNT2) (Pan troglodytes (Chimpanzee)).